The sequence spans 411 residues: Protein-lysine 6-oxidase (411 aa).

The N-terminal stretch at 1-21 is a signal peptide; the sequence is MRFAWTVLFLGQLQFCPLLRC. The propeptide at 22-162 is removed by BMP1; it reads APQAPREPPA…PPSHVDRMVG (141 aa). Residues 60-168 form a disordered region; the sequence is PQRRRDSSAT…RMVGDDPYNP (109 aa). Asn-91 and Asn-138 each carry an N-linked (GlcNAc...) asparagine glycan. Tyr-181 bears the Sulfotyrosine mark. A lysyl-oxidase like region spans residues 207 to 411; it reads PDLVPDPYYI…YASGCTISPY (205 aa). 5 disulfides stabilise this stretch: Cys-232–Cys-238, Cys-285–Cys-334, Cys-318–Cys-324, Cys-345–Cys-355, and Cys-392–Cys-406. The Cu cation site is built by His-286, His-288, and His-290. Residues 314-349 constitute a cross-link (lysine tyrosylquinone (Lys-Tyr)); that stretch reads KASFCLEDTSCDYGYHRRFACTAHTQGLSPGCYDTY. At Tyr-349 the chain carries 2',4',5'-topaquinone.

It belongs to the lysyl oxidase family. Interacts with MFAP4. Interacts (via propeptide) with EFEMP2; this interaction is strong and facilitates formation of ternary complexes with ELN during elastic fiber assembly; this interaction limits interaction of EFEMP2 with FBLN5. Cu cation serves as cofactor. Lysine tyrosylquinone residue is required as a cofactor. Post-translationally, the lysine tyrosylquinone cross-link (LTQ) is generated by condensation of the epsilon-amino group of a lysine with a topaquinone produced by oxidation of tyrosine. Proteolytically cleaved by BMP1 which removes the propeptide. Also proteolytically cleaved by ADAMTS2 and ADAMTS14, but not by ADAMTS3, at an additional cleavage site downstream of the BMP1 cleavage site. The propeptide plays a role in directing the deposition of this enzyme to elastic fibers, via interaction with tropoelastin. Cleavage by BMP1 to remove the propeptide does not increase enzymatic activity but increases binding to collagen. Cleavage by ADAMTS2 produces a form with reduced collagen-binding activity. In terms of processing, sulfated at Tyr-181 and also at either Tyr-177 or Tyr-178 which enhances binding to collagen. As to expression, aorta and lung.

Its subcellular location is the secreted. The protein localises to the extracellular space. It carries out the reaction L-lysyl-[protein] + O2 + H2O = (S)-2-amino-6-oxohexanoyl-[protein] + H2O2 + NH4(+). Its function is as follows. Responsible for the post-translational oxidative deamination of peptidyl lysine residues in precursors to fibrous collagen and elastin. Regulator of Ras expression. May play a role in tumor suppression. Plays a role in the aortic wall architecture. This chain is Protein-lysine 6-oxidase, found in Rattus norvegicus (Rat).